Reading from the N-terminus, the 262-residue chain is tRNA U34 carboxymethyltransferase (262 aa).

Carboxy-S-adenosyl-L-methionine is bound by residues K25, W39, K44, G63, 114–115, Y135, and R250; that span reads VE.

This sequence belongs to the class I-like SAM-binding methyltransferase superfamily. CmoB family. In terms of assembly, homotetramer.

The enzyme catalyses carboxy-S-adenosyl-L-methionine + 5-hydroxyuridine(34) in tRNA = 5-carboxymethoxyuridine(34) in tRNA + S-adenosyl-L-homocysteine + H(+). Functionally, catalyzes carboxymethyl transfer from carboxy-S-adenosyl-L-methionine (Cx-SAM) to 5-hydroxyuridine (ho5U) to form 5-carboxymethoxyuridine (cmo5U) at position 34 in tRNAs. The chain is tRNA U34 carboxymethyltransferase from Helicobacter acinonychis (strain Sheeba).